Consider the following 123-residue polypeptide: Alpha-lactalbumin (123 aa).

The 123-residue stretch at 1 to 123 (KQFTKCELSQ…KLEQWLCEEL (123 aa)) folds into the C-type lysozyme domain. 4 disulfide bridges follow: Cys6-Cys120, Cys28-Cys111, Cys61-Cys77, and Cys73-Cys91. Ca(2+) contacts are provided by Lys79, Asp82, Asp84, Asp87, and Asp88.

It belongs to the glycosyl hydrolase 22 family. In terms of assembly, lactose synthase (LS) is a heterodimer of a catalytic component, beta1,4-galactosyltransferase (beta4Gal-T1) and a regulatory component, alpha-lactalbumin (LA). Mammary gland specific. Secreted in milk.

Its subcellular location is the secreted. Regulatory subunit of lactose synthase, changes the substrate specificity of galactosyltransferase in the mammary gland making glucose a good acceptor substrate for this enzyme. This enables LS to synthesize lactose, the major carbohydrate component of milk. In other tissues, galactosyltransferase transfers galactose onto the N-acetylglucosamine of the oligosaccharide chains in glycoproteins. This chain is Alpha-lactalbumin (LALBA), found in Equus asinus (Donkey).